We begin with the raw amino-acid sequence, 89 residues long: Small ribosomal subunit protein uS17 (89 aa).

This sequence belongs to the universal ribosomal protein uS17 family. In terms of assembly, part of the 30S ribosomal subunit.

Its function is as follows. One of the primary rRNA binding proteins, it binds specifically to the 5'-end of 16S ribosomal RNA. The protein is Small ribosomal subunit protein uS17 of Leptospira borgpetersenii serovar Hardjo-bovis (strain JB197).